Here is a 442-residue protein sequence, read N- to C-terminus: Tyrosine-protein kinase transforming protein RYK (442 aa).

Residues 45 to 316 enclose the Protein kinase domain; the sequence is LSLGKVLGEG…QLKVHLEKLL (272 aa). Residues 51 to 59 and lysine 77 each bind ATP; that span reads LGEGEFGSV. Residue aspartate 181 is the Proton acceptor of the active site. The residue at position 212 (tyrosine 212) is a Phosphotyrosine; by autocatalysis.

Belongs to the protein kinase superfamily. Tyr protein kinase family. AXL/UFO subfamily.

It localises to the host cell membrane. It carries out the reaction L-tyrosyl-[protein] + ATP = O-phospho-L-tyrosyl-[protein] + ADP + H(+). This Avian retrovirus RPL30 protein is Tyrosine-protein kinase transforming protein RYK (V-RYK).